A 294-amino-acid polypeptide reads, in one-letter code: tRNA dimethylallyltransferase (294 aa).

11-18 is a binding site for ATP; sequence GPTAVGKT. 13–18 contacts substrate; that stretch reads TAVGKT. The segment at 36–39 is interaction with substrate tRNA; the sequence is DSQQ.

This sequence belongs to the IPP transferase family. Monomer. It depends on Mg(2+) as a cofactor.

It catalyses the reaction adenosine(37) in tRNA + dimethylallyl diphosphate = N(6)-dimethylallyladenosine(37) in tRNA + diphosphate. Functionally, catalyzes the transfer of a dimethylallyl group onto the adenine at position 37 in tRNAs that read codons beginning with uridine, leading to the formation of N6-(dimethylallyl)adenosine (i(6)A). The sequence is that of tRNA dimethylallyltransferase from Lactococcus lactis subsp. cremoris (strain SK11).